A 691-amino-acid polypeptide reads, in one-letter code: Threonine--tRNA ligase (691 aa).

Positions 1–22 (MSVPAQPAPGADGGDPRQPIRV) are disordered. The 73-residue stretch at 1–73 (MSVPAQPAPG…DADAEVTPIA (73 aa)) folds into the TGS domain. A catalytic region spans residues 268-574 (DHRKLGVELD…LTEHYAGAFP (307 aa)). Zn(2+) contacts are provided by Cys373, His424, and His551.

It belongs to the class-II aminoacyl-tRNA synthetase family. In terms of assembly, homodimer. Requires Zn(2+) as cofactor.

The protein resides in the cytoplasm. The enzyme catalyses tRNA(Thr) + L-threonine + ATP = L-threonyl-tRNA(Thr) + AMP + diphosphate + H(+). Catalyzes the attachment of threonine to tRNA(Thr) in a two-step reaction: L-threonine is first activated by ATP to form Thr-AMP and then transferred to the acceptor end of tRNA(Thr). Also edits incorrectly charged L-seryl-tRNA(Thr). The sequence is that of Threonine--tRNA ligase from Mycobacterium marinum (strain ATCC BAA-535 / M).